The chain runs to 345 residues: Protein-glutamate methylesterase/protein-glutamine glutaminase 2 (345 aa).

Residues 1 to 116 form the Response regulatory domain; sequence MVVDDSAVVR…KQFLVDASDD (116 aa). Asp50 carries the 4-aspartylphosphate modification. One can recognise a CheB-type methylesterase domain in the interval 154 to 345; sequence LQTTERVVAL…AREIMAQMAG (192 aa). Active-site residues include Ser166, His192, and Asp288.

Belongs to the CheB family. Post-translationally, phosphorylated by CheA. Phosphorylation of the N-terminal regulatory domain activates the methylesterase activity.

It localises to the cytoplasm. It catalyses the reaction [protein]-L-glutamate 5-O-methyl ester + H2O = L-glutamyl-[protein] + methanol + H(+). The catalysed reaction is L-glutaminyl-[protein] + H2O = L-glutamyl-[protein] + NH4(+). Involved in chemotaxis. Part of a chemotaxis signal transduction system that modulates chemotaxis in response to various stimuli. Catalyzes the demethylation of specific methylglutamate residues introduced into the chemoreceptors (methyl-accepting chemotaxis proteins or MCP) by CheR. Also mediates the irreversible deamidation of specific glutamine residues to glutamic acid. In Albidiferax ferrireducens (strain ATCC BAA-621 / DSM 15236 / T118) (Rhodoferax ferrireducens), this protein is Protein-glutamate methylesterase/protein-glutamine glutaminase 2.